The sequence spans 399 residues: Zona occludens toxin (399 aa).

In terms of biological role, increases the permeability of the small intestine mucosa by affecting the structure of intercellular tight junctions (zonula occludens). This chain is Zona occludens toxin (zot), found in Vibrio cholerae serotype O1 (strain ATCC 39315 / El Tor Inaba N16961).